A 121-amino-acid polypeptide reads, in one-letter code: Large ribosomal subunit protein bL20 (121 aa).

The protein belongs to the bacterial ribosomal protein bL20 family.

Functionally, binds directly to 23S ribosomal RNA and is necessary for the in vitro assembly process of the 50S ribosomal subunit. It is not involved in the protein synthesizing functions of that subunit. The chain is Large ribosomal subunit protein bL20 (rplT) from Chlamydia pneumoniae (Chlamydophila pneumoniae).